A 510-amino-acid polypeptide reads, in one-letter code: MLLEETEPPNQTLDHVLSWLEDSVSLSPLPGFDDSYLLHEFDGSQTWEWDQTQDPEHGFIQSYSQDLSAAYVGCEATNLEVVTEAPSIDLDLPPEIQQPNDQSRKRSHDGFLEAQQVKKSARSKRKAIKSSEKSSKDGNKEGRWAEKLLNPCALAITASNSSRVQHYLCVLSELASSSGDANRRLAAFGLRALQHHLSSSSVSSSFWPVFTFASAEVKMFQKTLLKFYEVSPWFALPNNMANSAILQILAQDPKDKKDLHIIDIGVSHGMQWPTLLEALSCRLEGPPPRVRITVISDLTADIPFSVGPPGYNYGSQLLGFARSLKINLQISVLDKLQLIDTSPHENLIVCAQFRLHHLKHSINDERGETLKAVRSLRPKGVVLCENNGECSSSADFAAGFSKKLEYVWKFLDSTSSGFKEENSEERKLMEGEATKVLMNAGDMNEGKEKWYERMREAGFFVEAFEEDAVDGAKSLLRKYDNNWEIRMEDGDTFAGLMWKGEAVSFCSLWK.

The disordered stretch occupies residues 90-142 (LDLPPEIQQPNDQSRKRSHDGFLEAQQVKKSARSKRKAIKSSEKSSKDGNKEG). The segment covering 102–111 (QSRKRSHDGF) has biased composition (basic and acidic residues). Residues 119-128 (KSARSKRKAI) are compositionally biased toward basic residues. Residues 129 to 142 (KSSEKSSKDGNKEG) are compositionally biased toward basic and acidic residues. Residues 136–510 (KDGNKEGRWA…EAVSFCSLWK (375 aa)) enclose the GRAS domain. The interval 143 to 205 (RWAEKLLNPC…HLSSSSVSSS (63 aa)) is leucine repeat I (LRI). A VHIID region spans residues 224–294 (LLKFYEVSPW…GPPPRVRITV (71 aa)). The short motif at 259–263 (LHIID) is the VHIID element. The leucine repeat II (LRII) stretch occupies residues 312 to 337 (NYGSQLLGFARSLKINLQISVLDKLQ). The interval 347–435 (LIVCAQFRLH…RKLMEGEATK (89 aa)) is PFYRE. An SAW region spans residues 438-510 (MNAGDMNEGK…EAVSFCSLWK (73 aa)).

This sequence belongs to the GRAS family. In terms of tissue distribution, expressed in seedlings, roots and flowers.

The protein localises to the nucleus. In terms of biological role, probable transcription factor involved in plant development. This chain is Scarecrow-like protein 29 (SCL29), found in Arabidopsis thaliana (Mouse-ear cress).